The sequence spans 322 residues: Ferrochelatase (322 aa).

Fe cation-binding residues include histidine 193 and glutamate 274.

This sequence belongs to the ferrochelatase family.

The protein localises to the cytoplasm. The enzyme catalyses heme b + 2 H(+) = protoporphyrin IX + Fe(2+). The protein operates within porphyrin-containing compound metabolism; protoheme biosynthesis; protoheme from protoporphyrin-IX: step 1/1. In terms of biological role, catalyzes the ferrous insertion into protoporphyrin IX. The chain is Ferrochelatase from Aliivibrio fischeri (strain MJ11) (Vibrio fischeri).